The primary structure comprises 344 residues: Heat-inducible transcription repressor HrcA (344 aa).

The protein belongs to the HrcA family.

Its function is as follows. Negative regulator of class I heat shock genes (grpE-dnaK-dnaJ and groELS operons). Prevents heat-shock induction of these operons. In Streptococcus pneumoniae (strain ATCC 700669 / Spain 23F-1), this protein is Heat-inducible transcription repressor HrcA.